The primary structure comprises 724 residues: Catalase-peroxidase (724 aa).

The tryptophyl-tyrosyl-methioninium (Trp-Tyr) (with M-251) cross-link spans 96–225 (WHAAGTYRVA…LAAVMMGLIY (130 aa)). His97 functions as the Proton acceptor in the catalytic mechanism. The tryptophyl-tyrosyl-methioninium (Tyr-Met) (with W-96) cross-link spans 225-251 (YVNPEGVDGNPDPLRTAEDVRITFERM). Residue His266 participates in heme b binding.

Belongs to the peroxidase family. Peroxidase/catalase subfamily. In terms of assembly, homodimer or homotetramer. It depends on heme b as a cofactor. Post-translationally, formation of the three residue Trp-Tyr-Met cross-link is important for the catalase, but not the peroxidase activity of the enzyme.

The catalysed reaction is H2O2 + AH2 = A + 2 H2O. It carries out the reaction 2 H2O2 = O2 + 2 H2O. Bifunctional enzyme with both catalase and broad-spectrum peroxidase activity. The protein is Catalase-peroxidase of Halorhodospira halophila (strain DSM 244 / SL1) (Ectothiorhodospira halophila (strain DSM 244 / SL1)).